A 327-amino-acid chain; its full sequence is Pyruvate dehydrogenase E1 component subunit beta (327 aa).

Glutamate 60 contributes to the thiamine diphosphate binding site. K(+) is bound by residues valine 113, alanine 161, isoleucine 162, and glutamate 164.

Heterodimer of an alpha and a beta chain. It depends on thiamine diphosphate as a cofactor.

The protein localises to the plastid. Its subcellular location is the chloroplast. It carries out the reaction N(6)-[(R)-lipoyl]-L-lysyl-[protein] + pyruvate + H(+) = N(6)-[(R)-S(8)-acetyldihydrolipoyl]-L-lysyl-[protein] + CO2. In terms of biological role, the pyruvate dehydrogenase complex catalyzes the overall conversion of pyruvate to acetyl-CoA and CO(2). It contains multiple copies of three enzymatic components: pyruvate dehydrogenase (E1), dihydrolipoamide acetyltransferase (E2) and lipoamide dehydrogenase (E3). This is Pyruvate dehydrogenase E1 component subunit beta (pdhB) from Cyanidium caldarium (Red alga).